The chain runs to 546 residues: Chaperonin GroEL 2 (546 aa).

ATP is bound by residues 30–33, Lys-51, 87–91, Gly-415, and Asp-495; these read TLGP and DGTTT.

Belongs to the chaperonin (HSP60) family. Forms a cylinder of 14 subunits composed of two heptameric rings stacked back-to-back. Interacts with the co-chaperonin GroES.

It localises to the cytoplasm. It catalyses the reaction ATP + H2O + a folded polypeptide = ADP + phosphate + an unfolded polypeptide.. Its function is as follows. Together with its co-chaperonin GroES, plays an essential role in assisting protein folding. The GroEL-GroES system forms a nano-cage that allows encapsulation of the non-native substrate proteins and provides a physical environment optimized to promote and accelerate protein folding. In Burkholderia cenocepacia (strain HI2424), this protein is Chaperonin GroEL 2.